The primary structure comprises 336 residues: Glycerol-3-phosphate dehydrogenase [NAD(P)+] (336 aa).

4 residues coordinate NADPH: Ser-16, Tyr-17, His-37, and Lys-111. The sn-glycerol 3-phosphate site is built by Lys-111, Gly-140, and Thr-142. Ala-144 lines the NADPH pocket. Positions 196, 249, 259, 260, and 261 each coordinate sn-glycerol 3-phosphate. Lys-196 serves as the catalytic Proton acceptor. Arg-260 is a binding site for NADPH. NADPH is bound by residues Val-284 and Glu-286.

It belongs to the NAD-dependent glycerol-3-phosphate dehydrogenase family.

The protein resides in the cytoplasm. It catalyses the reaction sn-glycerol 3-phosphate + NAD(+) = dihydroxyacetone phosphate + NADH + H(+). The enzyme catalyses sn-glycerol 3-phosphate + NADP(+) = dihydroxyacetone phosphate + NADPH + H(+). It functions in the pathway membrane lipid metabolism; glycerophospholipid metabolism. Its function is as follows. Catalyzes the reduction of the glycolytic intermediate dihydroxyacetone phosphate (DHAP) to sn-glycerol 3-phosphate (G3P), the key precursor for phospholipid synthesis. This is Glycerol-3-phosphate dehydrogenase [NAD(P)+] from Haemophilus ducreyi (strain 35000HP / ATCC 700724).